Consider the following 70-residue polypeptide: Small ribosomal subunit protein bS18 (70 aa).

This sequence belongs to the bacterial ribosomal protein bS18 family. As to quaternary structure, part of the 30S ribosomal subunit. Forms a tight heterodimer with protein bS6.

In terms of biological role, binds as a heterodimer with protein bS6 to the central domain of the 16S rRNA, where it helps stabilize the platform of the 30S subunit. This is Small ribosomal subunit protein bS18 from Salinibacter ruber (strain DSM 13855 / M31).